The sequence spans 357 residues: DNA replication and repair protein RecF (357 aa).

30–37 (GANGSGKT) lines the ATP pocket.

It belongs to the RecF family.

It localises to the cytoplasm. Its function is as follows. The RecF protein is involved in DNA metabolism; it is required for DNA replication and normal SOS inducibility. RecF binds preferentially to single-stranded, linear DNA. It also seems to bind ATP. This Salmonella schwarzengrund (strain CVM19633) protein is DNA replication and repair protein RecF.